The sequence spans 453 residues: Jacalin-related lectin 40 (453 aa).

Jacalin-type lectin domains lie at 1 to 142 (MAQK…YFTT), 154 to 296 (HIKL…YFSS), and 306 to 449 (PEKL…YVVP). An N-acetylalanine modification is found at Ala2.

It belongs to the jacalin lectin family. In terms of tissue distribution, expressed in roots.

The sequence is that of Jacalin-related lectin 40 (JAL40) from Arabidopsis thaliana (Mouse-ear cress).